The chain runs to 401 residues: Voltage-gated potassium channel subunit beta-1 (401 aa).

NADP(+) contacts are provided by Thr90, Trp91, Gln97, and Asp119. Tyr124 serves as the catalytic Proton donor/acceptor. Residues Asn192, Ser222, Arg223, Gln248, Trp277, Ser278, Pro279, Leu280, Ala281, Cys282, Lys288, Arg298, Gly357, Ser359, Gln363, Glu366, and Asn367 each coordinate NADP(+).

It belongs to the shaker potassium channel beta subunit family. In terms of assembly, homotetramer. Interaction with tetrameric potassium channel alpha subunits gives rise to a heterooctamer. Identified in potassium channel complexes containing KCNA1, KCNA2, KCNA4, KCNA5, KCNA6, KCNAB1 and KCNAB2. Part of a complex containing KCNA1, KCNA4 and LGI1; interaction with LGI1 inhibits down-regulation of KCNA1 channel activity. Interacts with the dimer formed by GNB1 and GNG2; this enhances KCNA1 binding. Interacts with SQSTM1.

Its subcellular location is the cytoplasm. It is found in the membrane. The protein localises to the cell membrane. The catalysed reaction is a primary alcohol + NADP(+) = an aldehyde + NADPH + H(+). The enzyme catalyses a secondary alcohol + NADP(+) = a ketone + NADPH + H(+). Functionally, regulatory subunit of the voltage-gated potassium (Kv) channels composed of pore-forming and potassium-conducting alpha subunits and of regulatory beta subunits. The beta-1/KCNAB1 cytoplasmic subunit mediates closure of delayed rectifier potassium channels by physically obstructing the pore via its N-terminal domain and increases the speed of channel closure for other family members. Promotes the inactivation of KCNA1, KCNA2, KCNA4, KCNA5 and KCNA6 alpha subunit-containing channels. Displays nicotinamide adenine dinucleotide phosphate (NADPH)-dependent aldoketoreductase activity by catalyzing the NADPH-dependent reduction of a variety of endogenous aldehydes and ketones. The binding of NADPH is required for efficient down-regulation of potassium channel activity. Oxidation of the bound NADPH restrains N-terminal domain from blocking the channel, thereby decreasing N-type inactivation of potassium channel activity. This Bos taurus (Bovine) protein is Voltage-gated potassium channel subunit beta-1 (KCNAB1).